The primary structure comprises 119 residues: MRQNKLIEKITASQLRDDIPEFRAGDTVRVHARIVEGSRERIQMFEGVVIKRHGAGISATYTVRKISNGVGVERTFPVHSPRVDKIDVLRYGRVRRAKLYYLRERTGKATRIAERRRDN.

The protein belongs to the bacterial ribosomal protein bL19 family.

Functionally, this protein is located at the 30S-50S ribosomal subunit interface and may play a role in the structure and function of the aminoacyl-tRNA binding site. In Limosilactobacillus reuteri (strain DSM 20016) (Lactobacillus reuteri), this protein is Large ribosomal subunit protein bL19.